Here is a 348-residue protein sequence, read N- to C-terminus: Anthranilate phosphoribosyltransferase (348 aa).

Residues G93, 96–97, T101, 103–106, 121–129, and S133 contribute to the 5-phospho-alpha-D-ribose 1-diphosphate site; these read GD, NVST, and KHGNRAVSS. Residue G93 participates in anthranilate binding. Residue S105 coordinates Mg(2+). N124 provides a ligand contact to anthranilate. R179 contacts anthranilate. Residues D238 and E239 each contribute to the Mg(2+) site.

The protein belongs to the anthranilate phosphoribosyltransferase family. Homodimer. Requires Mg(2+) as cofactor.

It catalyses the reaction N-(5-phospho-beta-D-ribosyl)anthranilate + diphosphate = 5-phospho-alpha-D-ribose 1-diphosphate + anthranilate. The protein operates within amino-acid biosynthesis; L-tryptophan biosynthesis; L-tryptophan from chorismate: step 2/5. Functionally, catalyzes the transfer of the phosphoribosyl group of 5-phosphorylribose-1-pyrophosphate (PRPP) to anthranilate to yield N-(5'-phosphoribosyl)-anthranilate (PRA). This is Anthranilate phosphoribosyltransferase from Desulfotalea psychrophila (strain LSv54 / DSM 12343).